Consider the following 195-residue polypeptide: MKELEEKIRQFGTVLPGNVLKVDAFLNHQVDPVLMQHIGQEFAARFKDAKITKVWTVESSGIAPAVMTGLALGVPVIFARKHKSLTLNSGMYTADVYSYTKKTTNRISISKRYVDKTDRVLLIDDFLANGQAVEGMLQIADQAGVEVVGAGIVIEKCFQPGSAELAAKGVRVESLAKVSSLADGQVSFKQTEGED.

Xanthine-binding residues include Leu20 and Asn27. Residue 128 to 132 coordinates 5-phospho-alpha-D-ribose 1-diphosphate; it reads ANGQA. Lys156 serves as a coordination point for xanthine.

The protein belongs to the purine/pyrimidine phosphoribosyltransferase family. Xpt subfamily. In terms of assembly, homodimer.

It localises to the cytoplasm. The enzyme catalyses XMP + diphosphate = xanthine + 5-phospho-alpha-D-ribose 1-diphosphate. Its pathway is purine metabolism; XMP biosynthesis via salvage pathway; XMP from xanthine: step 1/1. Its function is as follows. Converts the preformed base xanthine, a product of nucleic acid breakdown, to xanthosine 5'-monophosphate (XMP), so it can be reused for RNA or DNA synthesis. The polypeptide is Xanthine phosphoribosyltransferase (Limosilactobacillus fermentum (strain NBRC 3956 / LMG 18251) (Lactobacillus fermentum)).